The chain runs to 378 residues: Quinolinate synthase (378 aa).

The iminosuccinate site is built by H59 and S80. C125 contributes to the [4Fe-4S] cluster binding site. Iminosuccinate contacts are provided by residues Y151–N153 and S168. Residue C212 participates in [4Fe-4S] cluster binding. Iminosuccinate-binding positions include H238–E240 and T255. Residue C309 coordinates [4Fe-4S] cluster.

It belongs to the quinolinate synthase family. Type 1 subfamily. Requires [4Fe-4S] cluster as cofactor.

It localises to the cytoplasm. It catalyses the reaction iminosuccinate + dihydroxyacetone phosphate = quinolinate + phosphate + 2 H2O + H(+). Its pathway is cofactor biosynthesis; NAD(+) biosynthesis; quinolinate from iminoaspartate: step 1/1. Catalyzes the condensation of iminoaspartate with dihydroxyacetone phosphate to form quinolinate. This Burkholderia mallei (strain NCTC 10247) protein is Quinolinate synthase.